Consider the following 154-residue polypeptide: uncharacterized protein (154 aa).

Residues 13–128 (SKGVLLLRTL…VFTFVAVDNN (116 aa)) enclose the HotDog ACOT-type domain.

This sequence belongs to the acyl coenzyme A hydrolase family.

This is an uncharacterized protein from Haemophilus influenzae (strain ATCC 51907 / DSM 11121 / KW20 / Rd).